We begin with the raw amino-acid sequence, 261 residues long: [LysW]-aminoadipate/[LysW]-glutamate kinase (261 aa).

Substrate contacts are provided by residues 35–36, Arg62, and Asn166; that span reads GG.

This sequence belongs to the acetylglutamate kinase family. LysZ subfamily.

Its subcellular location is the cytoplasm. The catalysed reaction is [amino-group carrier protein]-C-terminal-N-(1,4-dicarboxybutan-1-yl)-L-glutamine + ATP = [amino-group carrier protein]-C-terminal-N-(1-carboxy-5-phosphooxy-5-oxopentan-1-yl)-L-glutamine + ADP. It carries out the reaction [amino-group carrier protein]-C-terminal-gamma-(L-glutamyl)-L-glutamate + ATP = [amino-group carrier protein]-C-terminal-gamma-(5-phospho-L-glutamyl)-L-glutamate + ADP. It participates in amino-acid biosynthesis; L-lysine biosynthesis via AAA pathway; L-lysine from L-alpha-aminoadipate (Thermus route): step 2/5. It functions in the pathway amino-acid biosynthesis; L-arginine biosynthesis. Functionally, involved in both the arginine and lysine biosynthetic pathways. Phosphorylates the LysW-bound precursors glutamate (for arginine biosynthesis), respectively alpha-aminoadipate (for lysine biosynthesis). This Sulfolobus acidocaldarius (strain ATCC 33909 / DSM 639 / JCM 8929 / NBRC 15157 / NCIMB 11770) protein is [LysW]-aminoadipate/[LysW]-glutamate kinase.